The primary structure comprises 335 residues: Beta-hexosaminidase (335 aa).

Substrate is bound by residues Asp60, Arg68, Arg133, and 163–164 (KH). His176 serves as the catalytic Proton donor/acceptor. Residue Asp247 is the Nucleophile of the active site.

The protein belongs to the glycosyl hydrolase 3 family. NagZ subfamily.

It is found in the cytoplasm. It carries out the reaction Hydrolysis of terminal non-reducing N-acetyl-D-hexosamine residues in N-acetyl-beta-D-hexosaminides.. It functions in the pathway cell wall biogenesis; peptidoglycan recycling. Plays a role in peptidoglycan recycling by cleaving the terminal beta-1,4-linked N-acetylglucosamine (GlcNAc) from peptide-linked peptidoglycan fragments, giving rise to free GlcNAc, anhydro-N-acetylmuramic acid and anhydro-N-acetylmuramic acid-linked peptides. This chain is Beta-hexosaminidase, found in Stenotrophomonas maltophilia (strain K279a).